The sequence spans 389 residues: WAT1-related protein At1g21890 (389 aa).

The next 10 membrane-spanning stretches (helical) occupy residues 13–33 (LAMISMQFGYAGMYIITMVSL), 40–60 (YVLAVYRHAIATAVIAPFALF), 73–93 (IFLQIALLGFIEPVLDQNLYY), 102–122 (TFASATANVLPAITFVLAIIF), 142–162 (VITVSGALLMTLYKGPIVDFI), 191–211 (WIPGTLMLLGRTFGWAGFFIL), 225–245 (LTTLICLMGTLEGTAVSLVTV), 260–280 (FAAAYSGVICSGVAYYVQGVV), 287–307 (VFVATFNPLCVVITAALGVVV), and 312–332 (IHLGSVIGTLFIIVGLYTVVW). EamA domains are found at residues 23-150 (AGMY…GALL) and 205-331 (WAGF…YTVV). The tract at residues 339–361 (RMTDDDEDCKGLPIKSPVKPVDT) is disordered.

Belongs to the drug/metabolite transporter (DMT) superfamily. Plant drug/metabolite exporter (P-DME) (TC 2.A.7.4) family.

The protein localises to the membrane. The chain is WAT1-related protein At1g21890 from Arabidopsis thaliana (Mouse-ear cress).